Here is a 161-residue protein sequence, read N- to C-terminus: Protein ilm1 (161 aa).

At 1–6 the chain is on the cytoplasmic side; sequence MLFSFR. Residues 7–27 traverse the membrane as a helical segment; it reads AIVLFYCCMLTFAGIGFLWNP. At 28–56 the chain is on the lumenal side; the sequence is KFVVESGLVALIGASMEVKPLIVTQDNLS. Residues 57–77 traverse the membrane as a helical segment; that stretch reads TLALSGLVFLILGMIYTISLL. At 78–81 the chain is on the cytoplasmic side; sequence QSNF. A helical membrane pass occupies residues 82 to 102; sequence LFFSGITPIRAIFDFILTGFI. Residues 103–112 are Lumenal-facing; it reads YLKKEHIASN. Residues 113 to 133 form a helical membrane-spanning segment; sequence SLTFTFAFCDLMWQFWMFAAM. Topologically, residues 134–161 are cytoplasmic; that stretch reads SEERAKYLKNQKKAEELAARKAREVEES.

The protein belongs to the ILM1 family.

It localises to the endoplasmic reticulum. The protein resides in the membrane. The polypeptide is Protein ilm1 (Schizosaccharomyces pombe (strain 972 / ATCC 24843) (Fission yeast)).